The sequence spans 412 residues: MDRHLCTCRETQLRSGLLLPLFLLMMLADLTLPAQRHPPVVLVPGDLGNQLEAKLDKPKVVHYLCSKKTDSYFTLWLNLELLLPVIIDCWIDNIRLVYNRTSRATQFPDGVDVRVPGFGETFSMEFLDPSKRNVGSYFYTMVESLVGWGYTRGEDVRGAPYDWRRAPNENGPYFLALREMIEEMYQMYGGPVVLVAHSMGNVYMLYFLQRQPQVWKDKYIHAFVSLGAPWGGVAKTLRVLASGDNNRIPVIGPLKIREQQRSAVSTSWLLPYNHTWSHEKVFVYTPTTNYTLRDYHRFFRDIGFEDGWFMRQDTEGLVEAMTPPGVELHCLYGTGVPTPNSFYYESFPDRDPKICFGDGDGTVNLESVLQCQAWQSRQEHRVSLQELPGSEHIEMLANATTLAYLKRVLLEP.

The first 33 residues, 1–33 (MDRHLCTCRETQLRSGLLLPLFLLMMLADLTLP), serve as a signal peptide directing secretion. Asp-46 contacts substrate. The cysteines at positions 65 and 89 are disulfide-linked. An N-linked (GlcNAc...) asparagine glycan is attached at Asn-99. Catalysis depends on Ser-198, which acts as the Acyl-ester intermediate. Ser-198 lines the Zn(2+) pocket. Met-199 contributes to the substrate binding site. 2 N-linked (GlcNAc...) asparagine glycosylation sites follow: Asn-273 and Asn-289. Cys-355 is a binding site for Zn(2+). Active-site charge relay system residues include Asp-360 and His-392. His-392 contacts Zn(2+). N-linked (GlcNAc...) asparagine glycosylation occurs at Asn-398.

The protein belongs to the AB hydrolase superfamily. Lipase family. In terms of processing, N-glycosylated. N-glycosylation is important for maturation of the enzyme and normal subcellular location. As to expression, detected in blood plasma. Detected in alveolar macrophages (at protein level). Detected in heart, liver, spleen, kidney, thymus, brain and lung.

The protein localises to the secreted. It localises to the lysosome. It is found in the membrane. It carries out the reaction a 1,2-diacyl-sn-glycero-3-phosphocholine + H2O = a 2-acyl-sn-glycero-3-phosphocholine + a fatty acid + H(+). The enzyme catalyses 1-hexadecanoyl-2-(9Z-octadecenoyl)-sn-glycero-3-phosphocholine + H2O = 2-(9Z-octadecenoyl)-sn-glycero-3-phosphocholine + hexadecanoate + H(+). It catalyses the reaction 1,2-di-(9Z-octadecenoyl)-sn-glycero-3-phosphocholine + H2O = 2-(9Z-octadecenoyl)-sn-glycero-3-phosphocholine + (9Z)-octadecenoate + H(+). The catalysed reaction is 1-hexadecanoyl-2-glutaroyl-sn-glycero-3-phosphocholine + H2O = 2-glutaroyl-sn-glycero-3-phosphocholine + hexadecanoate + H(+). It carries out the reaction 1-hexadecanoyl-2-nonadioyl-sn-glycero-3-phosphocholine + H2O = 2-nonadioyl-sn-glycero-3-phosphocholine + hexadecanoate + H(+). The enzyme catalyses 1-hexadecanoyl-2-(5-oxopentanoyl)-sn-glycero-3-phosphocholine + H2O = 2-(5-oxopentanoyl)-sn-glycero-3-phosphocholine + hexadecanoate + H(+). It catalyses the reaction 1-hexadecanoyl-2-(9-oxononanoyl)-sn-glycero-3-phosphocholine + H2O = 2-(9-oxononanoyl)-sn-glycero-3-phosphocholine + hexadecanoate + H(+). The catalysed reaction is 1,2-dihexadecanoyl-sn-glycero-3-phosphocholine + H2O = 2-hexadecanoyl-sn-glycero-3-phosphocholine + hexadecanoate + H(+). It carries out the reaction a 1,2-diacyl-sn-glycero-3-phosphocholine + H2O = a 1-acyl-sn-glycero-3-phosphocholine + a fatty acid + H(+). The enzyme catalyses 1-hexadecanoyl-2-(9Z-octadecenoyl)-sn-glycero-3-phosphocholine + H2O = 1-hexadecanoyl-sn-glycero-3-phosphocholine + (9Z)-octadecenoate + H(+). It catalyses the reaction 1,2-di-(9Z-octadecenoyl)-sn-glycero-3-phosphocholine + H2O = 1-(9Z-octadecenoyl)-sn-glycero-3-phosphocholine + (9Z)-octadecenoate + H(+). The catalysed reaction is 1,2-dihexadecanoyl-sn-glycero-3-phosphocholine + H2O = 1-hexadecanoyl-sn-glycero-3-phosphocholine + hexadecanoate + H(+). It carries out the reaction a 1-acyl-sn-glycero-3-phosphocholine + H2O = sn-glycerol 3-phosphocholine + a fatty acid + H(+). The enzyme catalyses 1-hexadecanoyl-sn-glycero-3-phosphocholine + H2O = sn-glycerol 3-phosphocholine + hexadecanoate + H(+). It catalyses the reaction N-(acetyl)-sphing-4-enine + a 1,2-diacyl-sn-glycero-3-phosphoethanolamine = 1-O-acyl-N-(acetyl)-sphing-4-enine + a 2-acyl-sn-glycero-3-phosphoethanolamine. The catalysed reaction is 1-hexadecanoyl-2-(9Z-octadecenoyl)-sn-glycero-3-phosphoethanolamine + N-(acetyl)-sphing-4-enine = 2-(9Z-octadecenoyl)-sn-glycero-3-phosphoethanolamine + 1-hexadecanoyl-N-(acetyl)-sphing-4-enine. It carries out the reaction 1-hexadecanoyl-2-(9Z,12Z-octadecadienoyl)-sn-glycero-3-phosphoethanolamine + N-(acetyl)-sphing-4-enine = 2-(9Z,12Z)-octadecadienoyl-sn-glycero-3-phosphoethanolamine + 1-hexadecanoyl-N-(acetyl)-sphing-4-enine. The enzyme catalyses 1-hexadecanoyl-2-(5Z,8Z,11Z,14Z-eicosatetraenoyl)-sn-glycero-3-phosphoethanolamine + N-(acetyl)-sphing-4-enine = 2-(5Z,8Z,11Z,14Z)-eicosatetraenoyl-sn-glycero-3-phosphoethanolamine + 1-hexadecanoyl-N-(acetyl)-sphing-4-enine. It catalyses the reaction N-(acetyl)-sphing-4-enine + a 1,2-diacyl-sn-glycero-3-phosphoethanolamine = 1-O-acyl-N-(acetyl)-sphing-4-enine + a 1-acyl-sn-glycero-3-phosphoethanolamine. The catalysed reaction is 1-hexadecanoyl-2-(9Z-octadecenoyl)-sn-glycero-3-phosphoethanolamine + N-(acetyl)-sphing-4-enine = 1-(9Z-octadecenoyl)-N-(acetyl)-sphing-4-enine + 1-hexadecanoyl-sn-glycero-3-phosphoethanolamine. It carries out the reaction 1-hexadecanoyl-2-(9Z,12Z-octadecadienoyl)-sn-glycero-3-phosphoethanolamine + N-(acetyl)-sphing-4-enine = 1-(9Z,12Z-octadecadienoyl)-N-acetylsphing-4-enine + 1-hexadecanoyl-sn-glycero-3-phosphoethanolamine. The enzyme catalyses 1-hexadecanoyl-2-(5Z,8Z,11Z,14Z-eicosatetraenoyl)-sn-glycero-3-phosphoethanolamine + N-(acetyl)-sphing-4-enine = 1-(5Z,8Z,11Z,14Z)-eicosatetraenoyl-N-(acetyl)-sphing-4-enine + 1-hexadecanoyl-sn-glycero-3-phosphoethanolamine. It catalyses the reaction N-(acetyl)-sphing-4-enine + a 1,2-diacyl-sn-glycero-3-phosphocholine = 1-O-acyl-N-(acetyl)-sphing-4-enine + a 2-acyl-sn-glycero-3-phosphocholine. The catalysed reaction is 1-hexadecanoyl-2-(9Z-octadecenoyl)-sn-glycero-3-phosphocholine + N-(acetyl)-sphing-4-enine = 1-hexadecanoyl-N-(acetyl)-sphing-4-enine + 2-(9Z-octadecenoyl)-sn-glycero-3-phosphocholine. It carries out the reaction 1-hexadecanoyl-2-(9Z,12Z-octadecadienoyl)-sn-glycero-3-phosphocholine + N-(acetyl)-sphing-4-enine = 2-(9Z,12Z-octadecadienoyl)-sn-glycero-3-phosphocholine + 1-hexadecanoyl-N-(acetyl)-sphing-4-enine. The enzyme catalyses 1-hexadecanoyl-2-(5Z,8Z,11Z,14Z-eicosatetraenoyl)-sn-glycero-3-phosphocholine + N-(acetyl)-sphing-4-enine = 1-hexadecanoyl-N-(acetyl)-sphing-4-enine + 2-(5Z,8Z,11Z,14Z)-eicosatetraenoyl-sn-glycero-3-phosphocholine. It catalyses the reaction 1-hexadecanoyl-2-(4Z,7Z,10Z,13Z,16Z,19Z-docosahexaenoyl)-sn-glycero-3-phosphocholine + N-(acetyl)-sphing-4-enine = 2-(4Z,7Z,10Z,13Z,16Z,19Z-docosahexaenoyl)-sn-glycero-3-phosphocholine + 1-hexadecanoyl-N-(acetyl)-sphing-4-enine. The catalysed reaction is 1-hexadecanoyl-2-nonadioyl-sn-glycero-3-phosphocholine + N-(acetyl)-sphing-4-enine = 2-nonadioyl-sn-glycero-3-phosphocholine + 1-hexadecanoyl-N-(acetyl)-sphing-4-enine. It carries out the reaction 1-octadecanoyl-2-(9Z-octadecenoyl)-sn-glycero-3-phosphocholine + N-(acetyl)-sphing-4-enine = 1-octadecanoyl-N-(acetyl)-sphing-4-enine + 2-(9Z-octadecenoyl)-sn-glycero-3-phosphocholine. The enzyme catalyses 1-(9Z)-octadecenoyl-2-octadecanoyl-sn-glycero-3-phosphocholine + N-(acetyl)-sphing-4-enine = 2-octadecanoyl-sn-glycero-3-phosphocholine + 1-(9Z-octadecenoyl)-N-(acetyl)-sphing-4-enine. It catalyses the reaction 1-octadecanoyl-2-(5Z,8Z,11Z,14Z-eicosatetraenoyl)-sn-glycero-3-phosphocholine + N-(acetyl)-sphing-4-enine = 1-octadecanoyl-N-(acetyl)-sphing-4-enine + 2-(5Z,8Z,11Z,14Z)-eicosatetraenoyl-sn-glycero-3-phosphocholine. The catalysed reaction is 1-(9Z-octadecenoyl)-2-hexadecanoyl-sn-glycero-3-phosphocholine + N-(acetyl)-sphing-4-enine = 1-(9Z-octadecenoyl)-N-(acetyl)-sphing-4-enine + 2-hexadecanoyl-sn-glycero-3-phosphocholine. It carries out the reaction N-(acetyl)-sphing-4-enine + a 1,2-diacyl-sn-glycero-3-phosphocholine = 1-O-acyl-N-(acetyl)-sphing-4-enine + a 1-acyl-sn-glycero-3-phosphocholine. The enzyme catalyses 1-hexadecanoyl-2-(9Z-octadecenoyl)-sn-glycero-3-phosphocholine + N-(acetyl)-sphing-4-enine = 1-(9Z-octadecenoyl)-N-(acetyl)-sphing-4-enine + 1-hexadecanoyl-sn-glycero-3-phosphocholine. It catalyses the reaction 1-hexadecanoyl-2-(9Z,12Z-octadecadienoyl)-sn-glycero-3-phosphocholine + N-(acetyl)-sphing-4-enine = 1-(9Z,12Z-octadecadienoyl)-N-acetylsphing-4-enine + 1-hexadecanoyl-sn-glycero-3-phosphocholine. The catalysed reaction is 1-hexadecanoyl-2-(5Z,8Z,11Z,14Z-eicosatetraenoyl)-sn-glycero-3-phosphocholine + N-(acetyl)-sphing-4-enine = 1-(5Z,8Z,11Z,14Z)-eicosatetraenoyl-N-(acetyl)-sphing-4-enine + 1-hexadecanoyl-sn-glycero-3-phosphocholine. It carries out the reaction 1-hexadecanoyl-2-(4Z,7Z,10Z,13Z,16Z,19Z-docosahexaenoyl)-sn-glycero-3-phosphocholine + N-(acetyl)-sphing-4-enine = 1-(4Z,7Z,10Z,13Z,16Z,19Z-docosahexaenoyl)-N-(acetyl)-sphing-4-enine + 1-hexadecanoyl-sn-glycero-3-phosphocholine. The enzyme catalyses 1-octadecanoyl-2-(9Z-octadecenoyl)-sn-glycero-3-phosphocholine + N-(acetyl)-sphing-4-enine = 1-(9Z-octadecenoyl)-N-(acetyl)-sphing-4-enine + 1-octadecanoyl-sn-glycero-3-phosphocholine. It catalyses the reaction 1-octadecanoyl-2-(9Z,12Z)-octadecadienoyl-sn-glycero-3-phosphocholine + N-(acetyl)-sphing-4-enine = 1-(9Z,12Z-octadecadienoyl)-N-acetylsphing-4-enine + 1-octadecanoyl-sn-glycero-3-phosphocholine. The catalysed reaction is 1-(9Z-octadecenoyl)-2-hexadecanoyl-sn-glycero-3-phosphocholine + N-(acetyl)-sphing-4-enine = 1-hexadecanoyl-N-(acetyl)-sphing-4-enine + 1-(9Z-octadecenoyl)-sn-glycero-3-phosphocholine. It carries out the reaction 1-(9Z)-octadecenoyl-2-octadecanoyl-sn-glycero-3-phosphocholine + N-(acetyl)-sphing-4-enine = 1-octadecanoyl-N-(acetyl)-sphing-4-enine + 1-(9Z-octadecenoyl)-sn-glycero-3-phosphocholine. The enzyme catalyses 1,2-di-(9Z-octadecenoyl)-sn-glycero-3-phosphocholine + N-(acetyl)-sphing-4-enine = 1-(9Z-octadecenoyl)-N-(acetyl)-sphing-4-enine + 1-(9Z-octadecenoyl)-sn-glycero-3-phosphocholine. It catalyses the reaction 1-octadecanoyl-2-(5Z,8Z,11Z,14Z-eicosatetraenoyl)-sn-glycero-3-phosphocholine + N-(acetyl)-sphing-4-enine = 1-(5Z,8Z,11Z,14Z)-eicosatetraenoyl-N-(acetyl)-sphing-4-enine + 1-octadecanoyl-sn-glycero-3-phosphocholine. The catalysed reaction is a 1,2-diacyl-sn-glycero-3-phospho-L-serine + N-(acetyl)-sphing-4-enine = a 2-acyl-sn-glycero-3-phospho-L-serine + 1-O-acyl-N-(acetyl)-sphing-4-enine. It carries out the reaction 1-octadecanoyl-2-(9Z-octadecenoyl)-sn-glycero-3-phospho-L-serine + N-(acetyl)-sphing-4-enine = 2-(9Z-octadecenoyl)-sn-glycero-3-phospho-L-serine + 1-octadecanoyl-N-(acetyl)-sphing-4-enine. The enzyme catalyses a 1,2-diacyl-sn-glycero-3-phospho-L-serine + N-(acetyl)-sphing-4-enine = 1-O-acyl-N-(acetyl)-sphing-4-enine + a 1-acyl-sn-glycero-3-phospho-L-serine. It catalyses the reaction 1-octadecanoyl-2-(9Z-octadecenoyl)-sn-glycero-3-phospho-L-serine + N-(acetyl)-sphing-4-enine = 1-octadecanoyl-sn-glycero-3-phosphoserine + 1-(9Z-octadecenoyl)-N-(acetyl)-sphing-4-enine. The catalysed reaction is a 1,2-diacyl-sn-glycero-3-phospho-(1'-sn-glycerol) + N-(acetyl)-sphing-4-enine = 2-acyl-sn-glycero-3-phospho-(1'-sn-glycerol) + 1-O-acyl-N-(acetyl)-sphing-4-enine. It carries out the reaction 1-octadecanoyl-2-(9Z-octadecenoyl)-sn-glycero-3-phospho-(1'-sn-glycerol) + N-(acetyl)-sphing-4-enine = 2-(9Z-octadecenoyl)-sn-glycero-3-phospho-(1'-sn-glycerol) + 1-octadecanoyl-N-(acetyl)-sphing-4-enine. The enzyme catalyses a 1,2-diacyl-sn-glycero-3-phospho-(1'-sn-glycerol) + N-(acetyl)-sphing-4-enine = 1-O-acyl-N-(acetyl)-sphing-4-enine + 1-acyl-sn-glycero-3-phospho-(1'-sn-glycerol). It catalyses the reaction 1-octadecanoyl-2-(9Z-octadecenoyl)-sn-glycero-3-phospho-(1'-sn-glycerol) + N-(acetyl)-sphing-4-enine = 1-octadecanoyl-sn-glycero-3-phospho-(1'-sn-glycerol) + 1-(9Z-octadecenoyl)-N-(acetyl)-sphing-4-enine. The catalysed reaction is an N-acylethanolamine + a 1,2-diacyl-sn-glycero-3-phosphocholine = 2-(acylamino)ethyl fatty acid + a 2-acyl-sn-glycero-3-phosphocholine. It carries out the reaction an N-acylethanolamine + a 1,2-diacyl-sn-glycero-3-phosphocholine = 2-(acylamino)ethyl fatty acid + a 1-acyl-sn-glycero-3-phosphocholine. The enzyme catalyses N-(5Z,8Z,11Z,14Z-eicosatetraenoyl)-ethanolamine + 1,2-di-(9Z-octadecenoyl)-sn-glycero-3-phosphocholine = 2-[(5Z,8Z,11Z,14Z)-eicosatetraenoylamino]ethyl (9Z)-octadecenoate + (9Z-octadecenoyl)-sn-glycero-3-phosphocholine. It catalyses the reaction N-(9Z-octadecenoyl) ethanolamine + 1,2-di-(9Z-octadecenoyl)-sn-glycero-3-phosphocholine = 2-[(9Z)-octadecenoylamino]ethyl (9Z)-octadecenoate + (9Z-octadecenoyl)-sn-glycero-3-phosphocholine. The catalysed reaction is a 3-acyl-sn-glycerol + a 1,2-diacyl-sn-glycero-3-phosphocholine = a 1,3-diacylglycerol + a 1-acyl-sn-glycero-3-phosphocholine. It carries out the reaction a 3-acyl-sn-glycerol + a 1,2-diacyl-sn-glycero-3-phosphocholine = a 1,3-diacylglycerol + a 2-acyl-sn-glycero-3-phosphocholine. The enzyme catalyses 3-(9Z-octadecenoyl)-sn-glycerol + 1,2-di-(9Z-octadecenoyl)-sn-glycero-3-phosphocholine = 1,3-di-(9Z-octadecenoyl)-glycerol + (9Z-octadecenoyl)-sn-glycero-3-phosphocholine. It catalyses the reaction 3-hexadecanoyl-sn-glycerol + 1,2-di-(9Z-octadecenoyl)-sn-glycero-3-phosphocholine = 1-(9Z)-octadecenoyl-3-hexadecanoyl-sn-glycerol + (9Z-octadecenoyl)-sn-glycero-3-phosphocholine. The catalysed reaction is a 1-acyl-sn-glycerol + a 1,2-diacyl-sn-glycero-3-phosphocholine = a 1,3-diacylglycerol + a 2-acyl-sn-glycero-3-phosphocholine. It carries out the reaction a 1-acyl-sn-glycerol + a 1,2-diacyl-sn-glycero-3-phosphocholine = a 1,3-diacylglycerol + a 1-acyl-sn-glycero-3-phosphocholine. The enzyme catalyses 1-(9Z-octadecenoyl)-sn-glycerol + 1,2-di-(9Z-octadecenoyl)-sn-glycero-3-phosphocholine = 1,3-di-(9Z-octadecenoyl)-glycerol + (9Z-octadecenoyl)-sn-glycero-3-phosphocholine. It catalyses the reaction 1-hexadecanoyl-sn-glycerol + 1,2-di-(9Z-octadecenoyl)-sn-glycero-3-phosphocholine = 1-hexadecanoyl-3-(9Z)-octadecenoyl-sn-glycerol + (9Z-octadecenoyl)-sn-glycero-3-phosphocholine. The catalysed reaction is a 2-acylglycerol + a 1,2-diacyl-sn-glycero-3-phosphocholine = a 1,2-diacylglycerol + a 2-acyl-sn-glycero-3-phosphocholine. It carries out the reaction a 2-acylglycerol + a 1,2-diacyl-sn-glycero-3-phosphocholine = a 1,2-diacylglycerol + a 1-acyl-sn-glycero-3-phosphocholine. The enzyme catalyses 2-hexadecanoylglycerol + 1,2-di-(9Z-octadecenoyl)-sn-glycero-3-phosphocholine = 1-(9Z)-octadecenoyl-2-hexadecanoylglycerol + (9Z-octadecenoyl)-sn-glycero-3-phosphocholine. It catalyses the reaction 1-O-alkylglycerol + a 1,2-diacyl-sn-glycero-3-phosphocholine = 1-O-alkyl-3-acylglycerol + a 1-acyl-sn-glycero-3-phosphocholine. The catalysed reaction is 1-O-alkylglycerol + a 1,2-diacyl-sn-glycero-3-phosphocholine = 1-O-alkyl-3-acylglycerol + a 2-acyl-sn-glycero-3-phosphocholine. It carries out the reaction 1-O-hexadecylglycerol + 1,2-di-(9Z-octadecenoyl)-sn-glycero-3-phosphocholine = 1-O-hexadecyl-3-(9Z)-octadecenoylglycerol + (9Z-octadecenoyl)-sn-glycero-3-phosphocholine. The enzyme catalyses 1-O-alkyl-2-acyl-sn-glycerol + a 1,2-diacyl-sn-glycero-3-phosphocholine = 1-O-alkyl-2,3-diacyl-sn-glycerol + a 2-acyl-sn-glycero-3-phosphocholine. It catalyses the reaction 1-O-alkyl-2-acyl-sn-glycerol + a 1,2-diacyl-sn-glycero-3-phosphocholine = 1-O-alkyl-2,3-diacyl-sn-glycerol + a 1-acyl-sn-glycero-3-phosphocholine. The catalysed reaction is 1-O-hexadecyl-2-acetyl-sn-glycerol + 1,2-di-(9Z-octadecenoyl)-sn-glycero-3-phosphocholine = 1-O-hexadecyl-2-acetyl-3-(9Z)-octadecenoyl-sn-glycerol + (9Z-octadecenoyl)-sn-glycero-3-phosphocholine. It carries out the reaction 1-O-hexadecyl-2-O-methyl-sn-glycerol + 1,2-di-(9Z-octadecenoyl)-sn-glycero-3-phosphocholine = 1-O-hexadecyl-2-O-methyl-3-(9Z)-octadecenoyl-sn-glycerol + (9Z-octadecenoyl)-sn-glycero-3-phosphocholine. The enzyme catalyses a 1,2-diacyl-sn-glycero-3-phosphoethanolamine + H2O = a 1-acyl-sn-glycero-3-phosphoethanolamine + a fatty acid + H(+). It catalyses the reaction 1-acyl-2-(5Z,8Z,11Z,14Z)-eicosatetraenoyl-sn-glycero-3-phosphoethanolamine + H2O = a 1-acyl-sn-glycero-3-phosphoethanolamine + (5Z,8Z,11Z,14Z)-eicosatetraenoate + H(+). The catalysed reaction is a 1,2-diacyl-sn-glycero-3-phospho-(1'-sn-glycerol) + H2O = 1-acyl-sn-glycero-3-phospho-(1'-sn-glycerol) + a fatty acid + H(+). It carries out the reaction 1-hexadecanoyl-2-(9Z-octadecenoyl)-sn-glycero-3-phospho-(1'-sn-glycerol) + H2O = 1-hexadecanoyl-sn-glycero-3-phospho-(1'-sn-glycerol) + (9Z)-octadecenoate + H(+). The enzyme catalyses a 1,2-diacyl-sn-glycero-3-phospho-(1'-sn-glycerol) + H2O = 2-acyl-sn-glycero-3-phospho-(1'-sn-glycerol) + a fatty acid + H(+). It catalyses the reaction 1-hexadecanoyl-2-(9Z-octadecenoyl)-sn-glycero-3-phospho-(1'-sn-glycerol) + H2O = 2-(9Z-octadecenoyl)-sn-glycero-3-phospho-(1'-sn-glycerol) + hexadecanoate + H(+). With respect to regulation, phospholipase sn-2 versus sn-1 positional specificity is affected by the phospholipid composition of membranes. Phospholipase A2 activity toward 1-hexadecanoyl-2-(5Z,8Z,11Z,14Z-eicosatetraenoyl)-sn-glycero-3-phosphocholine (PAPE) is enhanced in the presence of 1,2-dioleoyl-sn-glycero-3-phosphocholine (DOPC), which promotes lipid bilayer formation. O-acyltransferase activity is inhibited by antiarrhythmic drug amiodarone. Functionally, has dual calcium-independent phospholipase and O-acyltransferase activities with a potential role in glycerophospholipid homeostasis and remodeling of acyl groups of lipophilic alcohols present in acidic cellular compartments. Catalyzes hydrolysis of the ester bond of the fatty acyl group attached at sn-1 or sn-2 position of phospholipids (phospholipase A1 or A2 activity) and transfer it to the hydroxyl group at the first carbon of lipophilic alcohols (O-acyltransferase activity). Among preferred fatty acyl donors are phosphatidylcholines, phosphatidylethanolamines, phosphatidylglycerols and phosphatidylserines. Favors sn-2 over sn-1 deacylation of unsaturated fatty acyl groups of phosphatidylcholines, phosphatidylethanolamines, and phosphatidylglycerols. Among preferred fatty acyl acceptors are natural lipophilic alcohols including short-chain ceramide N-acetyl-sphingosine (C2 ceramide), alkylacylglycerols, monoacylglycerols, and acylethanolamides such as anandamide and oleoylethanolamide. Selectively hydrolyzes the sn-1 fatty acyl group of truncated oxidized phospholipids and may play a role in detoxification of reactive oxidized phospholipids during oxidative stress. Required for normal phospholipid degradation in alveolar macrophages with potential implications in the clearance of pulmonary surfactant, which is mainly composed of dipalmitoylphosphatidylcholine (1,2-dihexadecanoyl-sn-glycero-3-phosphocholine). Involved in the first step of bis(monoacylglycero)phosphate (BMP) de novo synthesis from phosphatidylglycerol (1,2-diacyl-sn-glycero-3-phospho-(1'-sn-glycerol), PG). BMP is an important player in cargo sorting and degradation, regulation of cellular cholesterol levels and intercellular communication. At neutral pH, hydrolyzes the sn-1 fatty acyl group of the lysophosphatidylcholines. This Mus musculus (Mouse) protein is Lysosomal phospholipase A and acyltransferase.